A 529-amino-acid polypeptide reads, in one-letter code: UDP-glucuronosyltransferase 2B7 (529 aa).

A signal peptide spans 1–23 (MSVKWTSVILLIQLSFCFSSGNC). 3 N-linked (GlcNAc...) asparagine glycosylation sites follow: Asn67, Asn68, and Asn315. Residues 373–379 (THGGANG) and Asp398 contribute to the UDP-alpha-D-glucuronate site. Residues 493 to 509 (VIGFLLVCVATVIFIVT) traverse the membrane as a helical segment.

Belongs to the UDP-glycosyltransferase family.

Its subcellular location is the endoplasmic reticulum membrane. It catalyses the reaction glucuronate acceptor + UDP-alpha-D-glucuronate = acceptor beta-D-glucuronoside + UDP + H(+). The catalysed reaction is 17alpha-estradiol + UDP-alpha-D-glucuronate = 17alpha-estradiol 17-O-(beta-D-glucuronate) + UDP + H(+). The enzyme catalyses 17beta-estradiol + UDP-alpha-D-glucuronate = 17beta-estradiol 17-O-(beta-D-glucuronate) + UDP + H(+). It carries out the reaction 2-hydroxy-17beta-estradiol + UDP-alpha-D-glucuronate = 2-hydroxy-17beta-estradiol 3-O-(beta-D-glucuronate) + UDP + H(+). It catalyses the reaction 4-hydroxy-17beta-estradiol + UDP-alpha-D-glucuronate = 17beta-estradiol 4-O-(beta-D-glucuronate) + UDP + H(+). The catalysed reaction is 4-hydroxyestrone + UDP-alpha-D-glucuronate = estrone 4-O-(beta-D-glucuronate) + UDP + H(+). The enzyme catalyses 16alpha-hydroxyestrone + UDP-alpha-D-glucuronate = 16alpha-hydroxyestrone 16-O-(beta-D-glucuronate) + UDP + H(+). It carries out the reaction 16alpha,17beta-estriol + UDP-alpha-D-glucuronate = 16alpha,17beta-estriol 16-O-(beta-D-glucuronate) + UDP + H(+). It catalyses the reaction 16beta,17beta-estriol + UDP-alpha-D-glucuronate = 16beta,17beta-estriol 16-O-(beta-D-glucuronate) + UDP + H(+). The catalysed reaction is 16alpha,17alpha-estriol + UDP-alpha-D-glucuronate = 16alpha,17alpha-estriol 16-O-(beta-D-glucuronate) + UDP + H(+). The enzyme catalyses 16alpha,17alpha-estriol + UDP-alpha-D-glucuronate = 16alpha,17alpha-estriol 17-O-(beta-D-glucuronate) + UDP + H(+). It carries out the reaction epitestosterone + UDP-alpha-D-glucuronate = epitestosterone 17-O-(beta-D-glucuronate) + UDP + H(+). It catalyses the reaction hyodeoxycholate + UDP-alpha-D-glucuronate = hyodeoxycholate 6-O-(beta-D-glucuronate) + UDP + H(+). The catalysed reaction is hyocholate + UDP-alpha-D-glucuronate = hyocholate 6-O-(beta-D-glucuronate) + UDP + H(+). The enzyme catalyses all-trans-retinoate + UDP-alpha-D-glucuronate = all-trans-retinoyl-1-O-(beta-D-glucuronate) + UDP. It carries out the reaction all-trans-4-hydroxyretinoate + UDP-alpha-D-glucuronate = all-trans-4-hydroxy-4-O-(beta-D-glucuronide)-retinoate + UDP + H(+). It catalyses the reaction (E)-ferulate + UDP-alpha-D-glucuronate = (E)-ferulic acid beta-D-glucuronate ester + UDP. The catalysed reaction is 8-iso-prostaglandin F2alpha + UDP-alpha-D-glucuronate = 8-iso-prostaglandin F2alpha-glucuronide + UDP + H(+). The enzyme catalyses 5-epi-5-F2t-IsoP + UDP-alpha-D-glucuronate = 5-epi-5-F2t-IsoP-glucuronide + UDP + H(+). It carries out the reaction (5Z,8Z,11Z,14Z)-eicosatetraenoate + UDP-alpha-D-glucuronate = O-[(5Z),(8Z),(11Z),(14Z)-eicosatetraenoyl]-beta-D-glucuronate + UDP. It catalyses the reaction 15-hydroxy-(5Z,8Z,11Z,13E)-eicosatetraenoate + UDP-alpha-D-glucuronate = 15-O-(beta-D-glucuronosyl)-(5Z,8Z,11Z,14Z)-eicosatetraenoate + UDP + H(+). The catalysed reaction is 20-hydroxy-(5Z,8Z,11Z,14Z)-eicosatetraenoate + UDP-alpha-D-glucuronate = 20-O-(beta-D-glucuronosyl)-(5Z,8Z,11Z,14Z)-eicosatetraenoate + UDP + H(+). The enzyme catalyses (E)-ferulate + UDP-alpha-D-glucuronate = (E)-4-O-(beta-D-glucuronosyl)-ferulate + UDP + H(+). It carries out the reaction prostaglandin B1 + UDP-alpha-D-glucuronate = 15-O-(beta-D-glucuronosyl)-prostaglandin B1 + UDP + H(+). It catalyses the reaction mycophenolate + UDP-alpha-D-glucuronate = mycophenolic acid O-acyl-beta-D-glucuronide + UDP. The catalysed reaction is losartan + UDP-alpha-D-glucuronate = losartan-2-N-beta-D-glucuronide + UDP. The enzyme catalyses candesartan + UDP-alpha-D-glucuronate = candesartan O-beta-D-glucuronoside + UDP. It carries out the reaction candesartan + UDP-alpha-D-glucuronate = candesartan-2-N-beta-D-glucuronide + UDP. It catalyses the reaction zolasartan + UDP-alpha-D-glucuronate = zolarsartan O-beta-D-glucuronoside + UDP. Its function is as follows. UDP-glucuronosyltransferase (UGT) that catalyzes phase II biotransformation reactions in which lipophilic substrates are conjugated with glucuronic acid to increase the metabolite's water solubility, thereby facilitating excretion into either the urine or bile. Essential for the elimination and detoxification of drugs, xenobiotics and endogenous compounds. Catalyzes the glucuronidation of endogenous steroid hormones such as androgens (epitestosterone, androsterone) and estrogens (estradiol, epiestradiol, estriol, catechol estrogens). Also regulates the levels of retinoic acid, a major metabolite of vitamin A involved in apoptosis, cellular growth and differentiation, and embryonic development. Contributes to bile acid (BA) detoxification by catalyzing the glucuronidation of BA substrates, which are natural detergents for dietary lipids absorption. Involved in the glucuronidation of arachidonic acid (AA) and AA-derived eicosanoids including 15-HETE, 20-HETE, PGE2, PGB1 and F2-isoprostanes (8-iso-PGF2alpha and 5-epi-5-F2t-IsoP). Involved in the glucuronidation of the phytochemical ferulic acid at the phenolic or the carboxylic acid group. Involved in the glucuronidation of the AGTR1 angiotensin receptor antagonist losartan, caderastan and zolarsatan, drugs which can inhibit the effect of angiotensin II. Also metabolizes mycophenolate, an immunosuppressive agent. The sequence is that of UDP-glucuronosyltransferase 2B7 from Homo sapiens (Human).